Consider the following 99-residue polypeptide: Co-chaperonin GroES (99 aa).

This sequence belongs to the GroES chaperonin family. In terms of assembly, heptamer of 7 subunits arranged in a ring. Interacts with the chaperonin GroEL.

The protein resides in the cytoplasm. In terms of biological role, together with the chaperonin GroEL, plays an essential role in assisting protein folding. The GroEL-GroES system forms a nano-cage that allows encapsulation of the non-native substrate proteins and provides a physical environment optimized to promote and accelerate protein folding. GroES binds to the apical surface of the GroEL ring, thereby capping the opening of the GroEL channel. The protein is Co-chaperonin GroES of Corynebacterium efficiens (strain DSM 44549 / YS-314 / AJ 12310 / JCM 11189 / NBRC 100395).